The primary structure comprises 156 residues: MSILTTAEEIINGQRAQDYGDAKENHERIATLWGAYKRGVEFTPEDVAVMMILLKIARFMENGYHQDTVVDIAGYAGVLEKMQLPEDERYPKGPRQWDTLLDVPADVKTVTNATGVKWIYYPNGLHHTKVGKRRWSGGNASSHEERMRGPFTEVAE.

The segment at 132–156 is disordered; sequence KRRWSGGNASSHEERMRGPFTEVAE.

The chain is Gene 55 protein (55) from Mycobacterium phage L5 (Mycobacteriophage L5).